A 314-amino-acid chain; its full sequence is Cytochrome f (314 aa).

The first 30 residues, 1–30, serve as a signal peptide directing secretion; that stretch reads MATNKFFKSLLFTLTIAISSFGFCVENSSA. Tyr31, Cys51, Cys54, and His55 together coordinate heme. The helical transmembrane segment at 280–300 threads the bilayer; sequence ILGYLAFCFCLLLTQVLLVLK.

Belongs to the cytochrome f family. The 4 large subunits of the cytochrome b6-f complex are cytochrome b6, subunit IV (17 kDa polypeptide, petD), cytochrome f and the Rieske protein, while the 4 small subunits are PetG, PetL, PetM and PetN. The complex functions as a dimer. Heme is required as a cofactor.

It is found in the plastid. Its subcellular location is the chloroplast thylakoid membrane. Functionally, component of the cytochrome b6-f complex, which mediates electron transfer between photosystem II (PSII) and photosystem I (PSI), cyclic electron flow around PSI, and state transitions. In Thalassiosira pseudonana (Marine diatom), this protein is Cytochrome f.